Here is a 130-residue protein sequence, read N- to C-terminus: MSKPRIALIAHDAKKDEIVALAGQYRETLAQCRLVATGTTGGRIAAAHGLEVERKLSGPLGGDLQIGAELADGRVDIVVFLRDPMTAQPHDPDITALVRACDVHDVPVATNVATARMLLDDLARNMQDVC.

Positions Met1–Cys130 constitute an MGS-like domain. Substrate-binding positions include His11, Lys15, Thr37 to Thr40, and Ser57 to Gly58. Asp63 functions as the Proton donor/acceptor in the catalytic mechanism. Substrate is bound at residue His90.

It belongs to the methylglyoxal synthase family.

It carries out the reaction dihydroxyacetone phosphate = methylglyoxal + phosphate. Functionally, catalyzes the formation of methylglyoxal from dihydroxyacetone phosphate. The polypeptide is Methylglyoxal synthase (Burkholderia cenocepacia (strain HI2424)).